The chain runs to 151 residues: Small ribosomal subunit protein uS11 (151 aa).

Phosphoserine is present on Ser16. Glycyl lysine isopeptide (Lys-Gly) (interchain with G-Cter in SUMO2) cross-links involve residues Lys61, Lys63, and Lys106. A disordered region spans residues 131 to 151; the sequence is DVTPIPSDSTRRKGGRRGRRL. Residue Thr133 is modified to Phosphothreonine. A Phosphoserine modification is found at Ser139. A compositionally biased stretch (basic residues) spans 142–151; sequence RKGGRRGRRL.

It belongs to the universal ribosomal protein uS11 family. In terms of assembly, component of the small ribosomal subunit. Part of the small subunit (SSU) processome, composed of more than 70 proteins and the RNA chaperone small nucleolar RNA (snoRNA) U3.

It localises to the cytoplasm. The protein resides in the nucleus. The protein localises to the nucleolus. Component of the small ribosomal subunit. The ribosome is a large ribonucleoprotein complex responsible for the synthesis of proteins in the cell. Part of the small subunit (SSU) processome, first precursor of the small eukaryotic ribosomal subunit. During the assembly of the SSU processome in the nucleolus, many ribosome biogenesis factors, an RNA chaperone and ribosomal proteins associate with the nascent pre-rRNA and work in concert to generate RNA folding, modifications, rearrangements and cleavage as well as targeted degradation of pre-ribosomal RNA by the RNA exosome. This is Small ribosomal subunit protein uS11 (Rps14) from Mus musculus (Mouse).